The following is a 194-amino-acid chain: NAD(P)H:quinone oxidoreductase (194 aa).

It belongs to the SsuE family. As to quaternary structure, homotetramer. FMN is required as a cofactor.

It carries out the reaction a quinone + NADH + H(+) = a quinol + NAD(+). The enzyme catalyses a quinone + NADPH + H(+) = a quinol + NADP(+). The enzyme apparently serves as a quinone reductase in connection with conjugation reactions of hydroquinones involved in detoxification pathways. This chain is NAD(P)H:quinone oxidoreductase, found in Solanum tuberosum (Potato).